The chain runs to 205 residues: Golgi to ER traffic protein 1 (205 aa).

At 1–3 (MDY) the chain is on the lumenal side. A helical membrane pass occupies residues 4-24 (WILLVLAFLVADKSWHLTGLL). Topologically, residues 25–96 (ATKLTSPERL…ATKARLAKLK (72 aa)) are cytoplasmic. The stretch at 32–96 (ERLQQLIRER…ATKARLAKLK (65 aa)) forms a coiled coil. A helical membrane pass occupies residues 97–117 (LLVVTVPFTALKFYKGKLPVY). The Lumenal segment spans residues 118–156 (ALPKGMFPRFIEGTLEHGWLYMALAPLNMKQFSEGASVA). Residues 157–173 (VSLGIWLFALLRVLGAI) traverse the membrane as a helical segment. Residues 174-205 (EFVLETLREQNPQVATETAKVHARTAQAASAN) lie on the Cytoplasmic side of the membrane.

This sequence belongs to the WRB/GET1 family. In terms of assembly, component of the Golgi to ER traffic (GET) complex, which is composed of GET1, GET2 and GET3. Within the complex, GET1 and GET2 form a heterotetramer which is stabilized by phosphatidylinositol binding and which binds to the GET3 homodimer.

It localises to the endoplasmic reticulum membrane. The protein localises to the golgi apparatus membrane. Required for the post-translational delivery of tail-anchored (TA) proteins to the endoplasmic reticulum. Together with GET2, acts as a membrane receptor for soluble GET3, which recognizes and selectively binds the transmembrane domain of TA proteins in the cytosol. The GET complex cooperates with the HDEL receptor ERD2 to mediate the ATP-dependent retrieval of resident ER proteins that contain a C-terminal H-D-E-L retention signal from the Golgi to the ER. This Eremothecium gossypii (strain ATCC 10895 / CBS 109.51 / FGSC 9923 / NRRL Y-1056) (Yeast) protein is Golgi to ER traffic protein 1.